A 356-amino-acid chain; its full sequence is UDP-N-acetylglucosamine--N-acetylmuramyl-(pentapeptide) pyrophosphoryl-undecaprenol N-acetylglucosamine transferase (356 aa).

UDP-N-acetyl-alpha-D-glucosamine contacts are provided by residues 12–14 (TAG), R166, S196, and Q291.

This sequence belongs to the glycosyltransferase 28 family. MurG subfamily.

The protein localises to the cell membrane. The catalysed reaction is di-trans,octa-cis-undecaprenyl diphospho-N-acetyl-alpha-D-muramoyl-L-alanyl-D-glutamyl-meso-2,6-diaminopimeloyl-D-alanyl-D-alanine + UDP-N-acetyl-alpha-D-glucosamine = di-trans,octa-cis-undecaprenyl diphospho-[N-acetyl-alpha-D-glucosaminyl-(1-&gt;4)]-N-acetyl-alpha-D-muramoyl-L-alanyl-D-glutamyl-meso-2,6-diaminopimeloyl-D-alanyl-D-alanine + UDP + H(+). The protein operates within cell wall biogenesis; peptidoglycan biosynthesis. Cell wall formation. Catalyzes the transfer of a GlcNAc subunit on undecaprenyl-pyrophosphoryl-MurNAc-pentapeptide (lipid intermediate I) to form undecaprenyl-pyrophosphoryl-MurNAc-(pentapeptide)GlcNAc (lipid intermediate II). The sequence is that of UDP-N-acetylglucosamine--N-acetylmuramyl-(pentapeptide) pyrophosphoryl-undecaprenol N-acetylglucosamine transferase from Geobacillus thermodenitrificans (strain NG80-2).